Consider the following 433-residue polypeptide: Staphylopine synthase (433 aa).

NADP(+) contacts are provided by residues threonine 9 to valine 12, arginine 33, serine 37 to serine 40, and aspartate 99. The active-site Proton donor/acceptor is histidine 216.

This sequence belongs to the staphylopine dehydrogenase family. As to quaternary structure, homodimer.

The catalysed reaction is staphylopine + NADP(+) + H2O = (2S)-2-amino-4-{[(1R)-1-carboxy-2-(1H-imidazol-4-yl)ethyl]amino}butanoate + pyruvate + NADPH + H(+). Functionally, catalyzes the NADPH-dependent reductive condensation of pyruvate to the intermediate formed by the adjacently encoded enzyme CntL, namely (2S)-2-amino-4-{[(1R)-1-carboxy-2-(1H-imidazol-4-yl)ethyl]amino}butanoate, leading to the production of staphylopine. This is the last step in the biosynthesis of the metallophore staphylopine, which is involved in the acquisition of nickel, cobalt, zinc, copper, and iron, and thus enables bacterial growth inside the host, where metal access is limited. Therefore, this enzyme probably contributes to staphylococcal virulence. Can use neither NADH nor alpha-ketoglutarate in place of NADPH and pyruvate, respectively. This chain is Staphylopine synthase, found in Staphylococcus aureus (strain Mu50 / ATCC 700699).